A 226-amino-acid chain; its full sequence is uncharacterized protein (226 aa).

A helical transmembrane segment spans residues 5-25 (IKTVSFAAAAILVVIICTFLI).

The protein localises to the cell membrane. This is an uncharacterized protein from Bacillus subtilis (strain 168).